The following is a 712-amino-acid chain: 1,4-alpha-glucan branching enzyme GlgB (712 aa).

The active-site Nucleophile is the aspartate 397. Residue glutamate 450 is the Proton donor of the active site.

It belongs to the glycosyl hydrolase 13 family. GlgB subfamily. In terms of assembly, monomer.

It catalyses the reaction Transfers a segment of a (1-&gt;4)-alpha-D-glucan chain to a primary hydroxy group in a similar glucan chain.. The protein operates within glycan biosynthesis; glycogen biosynthesis. Functionally, catalyzes the formation of the alpha-1,6-glucosidic linkages in glycogen by scission of a 1,4-alpha-linked oligosaccharide from growing alpha-1,4-glucan chains and the subsequent attachment of the oligosaccharide to the alpha-1,6 position. The sequence is that of 1,4-alpha-glucan branching enzyme GlgB from Bradyrhizobium sp. (strain ORS 278).